A 509-amino-acid polypeptide reads, in one-letter code: Cytochrome P450 4X1 (509 aa).

A helical transmembrane segment spans residues 14–34 (FYLAFVFCLALGLLQAIKLYL). Cys-454 contributes to the heme binding site.

The protein belongs to the cytochrome P450 family. Heme serves as cofactor. In terms of tissue distribution, expressed in brain, heart, kidney and skin and, at lower levels, in skeletal muscle and liver. In the brain, high levels are detected in amygdala and lower levels in globus pallidus and cerebellum. In the heart, very high levels in aorta, but very low levels in other heart regions. Also expressed in breast, prostate and colon.

It localises to the endoplasmic reticulum membrane. The protein resides in the microsome membrane. It carries out the reaction N-(5Z,8Z,11Z,14Z-eicosatetraenoyl)-ethanolamine + reduced [NADPH--hemoprotein reductase] + O2 = N-(14,15-epoxy-5Z,8Z,11Z-eicosatrienoyl)-ethanolamine + oxidized [NADPH--hemoprotein reductase] + H2O + H(+). In terms of biological role, a cytochrome P450 monooxygenase that selectively catalyzes the epoxidation of the last double bond of the arachidonoyl moiety of anandamide, potentially modulating endocannabinoid signaling. Has no hydroxylase activity toward various fatty acids, steroids and prostaglandins. Mechanistically, uses molecular oxygen inserting one oxygen atom into a substrate, and reducing the second into a water molecule, with two electrons provided by NADPH via cytochrome P450 reductase (CPR; NADPH-ferrihemoprotein reductase). The chain is Cytochrome P450 4X1 from Homo sapiens (Human).